The following is an 87-amino-acid chain: Small ribosomal subunit protein bS20 (87 aa).

The protein belongs to the bacterial ribosomal protein bS20 family.

Its function is as follows. Binds directly to 16S ribosomal RNA. The sequence is that of Small ribosomal subunit protein bS20 from Brachyspira hyodysenteriae (strain ATCC 49526 / WA1).